A 102-amino-acid polypeptide reads, in one-letter code: MIVPFEHVLILAGLLFALGLVCVLVWRMNLIMLLIGIEVMLNAAMLAFVGGAARWGMADGQVFSLIIMALTSAEVSLALAMVVYLHRRKKTVDADEFRELQG.

The next 3 membrane-spanning stretches (helical) occupy residues phenylalanine 5–valine 25, leucine 30–glycine 50, and leucine 65–leucine 85.

It belongs to the complex I subunit 4L family. NDH-1 is composed of 14 different subunits. Subunits NuoA, H, J, K, L, M, N constitute the membrane sector of the complex.

It is found in the cell inner membrane. The enzyme catalyses a quinone + NADH + 5 H(+)(in) = a quinol + NAD(+) + 4 H(+)(out). Its function is as follows. NDH-1 shuttles electrons from NADH, via FMN and iron-sulfur (Fe-S) centers, to quinones in the respiratory chain. The immediate electron acceptor for the enzyme in this species is believed to be ubiquinone. Couples the redox reaction to proton translocation (for every two electrons transferred, four hydrogen ions are translocated across the cytoplasmic membrane), and thus conserves the redox energy in a proton gradient. The polypeptide is NADH-quinone oxidoreductase subunit K 2 (Geobacter sulfurreducens (strain ATCC 51573 / DSM 12127 / PCA)).